A 33-amino-acid polypeptide reads, in one-letter code: U1-pseudomyrmecitoxin-Pt1 subunit LS1 (33 aa).

Belongs to the myrmexin family. Heterodimer composed of subunit LS1 and subunit SS1 (U1-PSDTX-Pt1b), heterodimer composed of subunit LS1 and SS2 (U1-PSDTX-Pt1b), and heterodimer composed of subunit LS1 and SS3; disulfide-linked. As to expression, expressed by the venom gland.

The protein localises to the secreted. Functionally, this heterodimer may have anti-inflammatory properties, since the myrmexin complex (composed of 6 SS-LS heterodimers) inhibits carrageenin-induced edema in a dose-dependent manner (after subcutaneous injection into rats). The protein is U1-pseudomyrmecitoxin-Pt1 subunit LS1 of Pseudomyrmex triplarinus (Ant).